The following is a 309-amino-acid chain: Homoserine O-succinyltransferase (309 aa).

C142 functions as the Acyl-thioester intermediate in the catalytic mechanism. Substrate is bound by residues K163 and S192. H235 serves as the catalytic Proton acceptor. The active site involves E237. Position 249 (R249) interacts with substrate.

It belongs to the MetA family. Homodimer.

Its subcellular location is the cytoplasm. It catalyses the reaction L-homoserine + succinyl-CoA = O-succinyl-L-homoserine + CoA. The protein operates within amino-acid biosynthesis; L-methionine biosynthesis via de novo pathway; O-succinyl-L-homoserine from L-homoserine: step 1/1. Functionally, transfers a succinyl group from succinyl-CoA to L-homoserine, forming succinyl-L-homoserine. This is Homoserine O-succinyltransferase from Escherichia coli O127:H6 (strain E2348/69 / EPEC).